A 185-amino-acid chain; its full sequence is Ribosome maturation factor RimM (185 aa).

The 76-residue stretch at 96 to 171 (EDEFYHSDLL…VITIDPPEDV (76 aa)) folds into the PRC barrel domain. The segment at 165–185 (IDPPEDVGSKAEEEGGGAPDD) is disordered.

The protein belongs to the RimM family. In terms of assembly, binds ribosomal protein uS19.

The protein resides in the cytoplasm. In terms of biological role, an accessory protein needed during the final step in the assembly of 30S ribosomal subunit, possibly for assembly of the head region. Essential for efficient processing of 16S rRNA. May be needed both before and after RbfA during the maturation of 16S rRNA. It has affinity for free ribosomal 30S subunits but not for 70S ribosomes. The polypeptide is Ribosome maturation factor RimM (Maricaulis maris (strain MCS10) (Caulobacter maris)).